The primary structure comprises 272 residues: Rhomboid-type serine protease B (272 aa).

The next 5 helical transmembrane spans lie at 30-50 (IVLL…WSVV), 72-92 (PFIH…TPLL), 103-123 (TAVA…YILV), 133-153 (AVVG…IKTF), and 164-184 (TKIP…IFVP). The Nucleophile role is filled by serine 138. Residue asparagine 185 is glycosylated (N-linked (GlcNAc...) asparagine). The chain crosses the membrane as a helical span at residues 186 to 206 (TSFLGHLSAIIIGYLLGLGYL). Residue histidine 191 is part of the active site.

Belongs to the peptidase S54 family.

The protein resides in the membrane. It carries out the reaction Cleaves type-1 transmembrane domains using a catalytic dyad composed of serine and histidine that are contributed by different transmembrane domains.. In terms of biological role, rhomboid protease that catalyzes intramembrane proteolysis. Required for transcription factor srbA activation by mediating its release from the membrane and thereby regulating its activity under hypoxic conditions. Essential for iron homeostasis and resistance to azoles such as voriconazole. Required for virulence in murine models of invasive pulmonary aspergillosis (IPA). In Aspergillus fumigatus (strain CBS 144.89 / FGSC A1163 / CEA10) (Neosartorya fumigata), this protein is Rhomboid-type serine protease B.